Reading from the N-terminus, the 29-residue chain is Orphan peptide CllNtx (29 aa).

Contains 3 disulfide bonds. In terms of tissue distribution, expressed by the venom gland.

It localises to the secreted. Its function is as follows. May act as a toxin. In Centruroides limpidus (Mexican scorpion), this protein is Orphan peptide CllNtx.